The primary structure comprises 372 residues: Cytochrome b (372 aa).

Helical transmembrane passes span 25-45 (FGSMLLTCLALQTMTGFFLAI), 69-90 (WMMQNLHAIGASMFFICIYIHI), 105-125 (WLSGTTLLIILMATAFFGYVL), and 170-190 (FFALHFILPFTIISMSSIHIM). Residues histidine 75 and histidine 89 each coordinate heme b. Residues histidine 174 and histidine 188 each coordinate heme b. Histidine 193 is an a ubiquinone binding site. Helical transmembrane passes span 218–238 (HKDMLMFTIMITMLFIIMSFT), 280–300 (LGGTVALVLSVTILLTMPFTH), 312–332 (LMQFMFWTLVATFITITWAAT), and 339–358 (FTSIGQVTAILYFLFFTMNP).

The protein belongs to the cytochrome b family. The cytochrome bc1 complex contains 3 respiratory subunits (MT-CYB, CYC1 and UQCRFS1), 2 core proteins (UQCRC1 and UQCRC2) and probably 6 low-molecular weight proteins. Heme b serves as cofactor.

Its subcellular location is the mitochondrion inner membrane. Its function is as follows. Component of the ubiquinol-cytochrome c reductase complex (complex III or cytochrome b-c1 complex) that is part of the mitochondrial respiratory chain. The b-c1 complex mediates electron transfer from ubiquinol to cytochrome c. Contributes to the generation of a proton gradient across the mitochondrial membrane that is then used for ATP synthesis. The protein is Cytochrome b (MT-CYB) of Pantherophis vulpinus (Western fox snake).